The chain runs to 402 residues: D-mannonate dehydratase (402 aa).

Residues asparagine 37 and histidine 122 each contribute to the substrate site. The Proton donor/acceptor role is filled by tyrosine 159. Aspartate 210 contributes to the Mg(2+) binding site. Residue histidine 212 is the Proton donor/acceptor of the active site. Mg(2+) is bound by residues glutamate 236 and glutamate 262. Residues glutamate 262, arginine 283, histidine 312, aspartate 316, and glutamate 339 each coordinate substrate.

Belongs to the mandelate racemase/muconate lactonizing enzyme family. GalD subfamily. The cofactor is Mg(2+).

It carries out the reaction D-mannonate = 2-dehydro-3-deoxy-D-gluconate + H2O. It functions in the pathway carbohydrate metabolism; pentose and glucuronate interconversion. In terms of biological role, catalyzes the dehydration of D-mannonate. Has no detectable activity with a panel of 70 other acid sugars (in vitro). In Rhizorhabdus wittichii (strain DSM 6014 / CCUG 31198 / JCM 15750 / NBRC 105917 / EY 4224 / RW1) (Sphingomonas wittichii), this protein is D-mannonate dehydratase.